Consider the following 296-residue polypeptide: Triplex capsid protein 2 (296 aa).

It belongs to the herpesviridae TRX2 protein family. As to quaternary structure, interacts with TRX1 and major capisd protein/MCP.

It is found in the virion. The protein localises to the host nucleus. Its function is as follows. Structural component of the T=16 icosahedral capsid. The capsid is composed of pentamers and hexamers of major capsid protein/MCP, which are linked together by heterotrimers called triplexes. These triplexes are formed by a single molecule of triplex protein 1/TRX1 and two copies of triplex protein 2/TRX2. Additionally, TRX1 is required for efficient transport of TRX2 to the nucleus, which is the site of capsid assembly. This is Triplex capsid protein 2 from Human herpesvirus 6A (strain Uganda-1102) (HHV-6 variant A).